Here is a 35-residue protein sequence, read N- to C-terminus: MEALVYTFLLISTLGIIFFAIFFRDPPRISTKKMK.

The helical transmembrane segment at 3–23 (ALVYTFLLISTLGIIFFAIFF) threads the bilayer.

The protein belongs to the PsbT family. As to quaternary structure, PSII is composed of 1 copy each of membrane proteins PsbA, PsbB, PsbC, PsbD, PsbE, PsbF, PsbH, PsbI, PsbJ, PsbK, PsbL, PsbM, PsbT, PsbY, PsbZ, Psb30/Ycf12, at least 3 peripheral proteins of the oxygen-evolving complex and a large number of cofactors. It forms dimeric complexes.

The protein resides in the plastid. It is found in the chloroplast thylakoid membrane. Its function is as follows. Found at the monomer-monomer interface of the photosystem II (PS II) dimer, plays a role in assembly and dimerization of PSII. PSII is a light-driven water plastoquinone oxidoreductase, using light energy to abstract electrons from H(2)O, generating a proton gradient subsequently used for ATP formation. The chain is Photosystem II reaction center protein T from Aristolochia macrophylla (Dutchman's pipe vine).